The sequence spans 468 residues: Sorting and assembly machinery component 50 homolog B (468 aa).

The tract at residues 1–25 (MGTVHARSLDPLPMNGPDFGSPDDA) is disordered. The POTRA domain occupies 44–124 (VVVQRVHFEG…LDVTFEVTEL (81 aa)).

This sequence belongs to the SAM50/omp85 family. In terms of assembly, associates with the mitochondrial contact site and cristae organizing system (MICOS) complex (also known as MINOS or MitOS complex).

It is found in the mitochondrion outer membrane. Functionally, may play a role in the maintenance of the structure of mitochondrial cristae. The protein is Sorting and assembly machinery component 50 homolog B (samm50-b) of Xenopus laevis (African clawed frog).